Consider the following 1066-residue polypeptide: Pumilio homolog 2 (1066 aa).

Residues 1–260 (MNHDFQALAL…ATVGLFDYNS (260 aa)) are interaction with SNAPIN. 3 positions are modified to phosphoserine: serine 67, serine 82, and serine 102. The disordered stretch occupies residues 106-204 (KLDSRFRKGN…NPSEGLGPLP (99 aa)). The segment covering 119–133 (RDAETDGPEKGDQKG) has biased composition (basic and acidic residues). 3 positions are modified to phosphoserine: serine 136, serine 178, and serine 182. Phosphothreonine is present on residues threonine 184 and threonine 396. Positions 494 to 553 (STNGLFRPIGTQPPQQQQQQPSTNLQSNSFYGSSSLTNSSQSSSLFSHGPGQPGSTSLGF) are disordered. A compositionally biased stretch (low complexity) spans 505-514 (QPPQQQQQQP). Over residues 515–525 (STNLQSNSFYG) the composition is skewed to polar residues. Residues 526–540 (SSSLTNSSQSSSLFS) are compositionally biased toward low complexity. Phosphoserine is present on residues serine 587 and serine 592. Residues 620–650 (SPIGMPLPSQTPGHSLTPPPSLSSHGSSSSL) form a disordered region. Low complexity predominate over residues 630 to 650 (TPGHSLTPPPSLSSHGSSSSL). Residue arginine 674 is modified to Omega-N-methylarginine. 2 positions are modified to phosphoserine: serine 684 and serine 700. Residues 706–1048 (GRSRLLEDFR…HILAKLEKYY (343 aa)) form the PUM-HD domain. Pumilio repeat units lie at residues 726 to 761 (DLIG…MVFN), 762 to 797 (EILQ…ALAT), 798 to 835 (RIRG…EMVK), 836 to 871 (ELDG…FIID), 872 to 907 (AFKG…PILE), 908 to 943 (ELHQ…KIVS), 944 to 979 (EIRG…LLID), and 983 to 1022 (CQND…IIMH). The adenine-nucleotide binding in RNA target stretch occupies residues 741–745 (SRFIQ). Residues 777–781 (NYVIQ) form a uracil-nucleotide binding in RNA target region. An adenine-nucleotide binding in RNA target region spans residues 813-817 (CRVIQ). The tract at residues 851 to 855 (NHVVQ) is non-specific-nucleotide binding in RNA target. The tract at residues 887 to 891 (CRVIQ) is adenine-nucleotide binding in RNA target. A uracil-nucleotide binding in RNA target region spans residues 923–927 (NYVIQ). A guanine-nucleotide binding in RNA target region spans residues 959 to 963 (SNVVE). Residues 1002 to 1006 (NYVVQ) are uracil-nucleotide binding in RNA target.

In terms of assembly, homodimer; homodimerizes in vitro. Interacts with DAZ1, DAZL and NANOS1 via its pumilio repeats. Interacts with NANOS3. Interacts with SNAPIN. Recruits the CCR4-POP2-NOT deadenylase leading to translational inhibition and mRNA degradation. Interacts with DDX20. In case of viral infection, interacts with DHX58. Interacts with TRIM71 (via NHL repeats) in an RNA-dependent manner. As to expression, expressed in male germ cells of adult testis (at protein level). Highly expressed in testis and ovary. Predominantly expressed in stem cells and germ cells. Expressed at lower level in brain, heart, kidney, liver, muscle, placenta, intestine and stomach Expressed in cerebellum, corpus callosum, caudate nucleus, hippocampus, medulla oblongata and putamen. Expressed in all fetal tissues tested.

Its subcellular location is the cytoplasm. It is found in the cytoplasmic granule. The protein resides in the perinuclear region. Functionally, sequence-specific RNA-binding protein that acts as a post-transcriptional repressor by binding the 3'-UTR of mRNA targets. Binds to an RNA consensus sequence, the Pumilio Response Element (PRE), 5'-UGUANAUA-3', that is related to the Nanos Response Element (NRE) (, PubMed:21397187). Mediates post-transcriptional repression of transcripts via different mechanisms: acts via direct recruitment of the CCR4-POP2-NOT deadenylase leading to translational inhibition and mRNA degradation. Also mediates deadenylation-independent repression by promoting accessibility of miRNAs. Acts as a post-transcriptional repressor of E2F3 mRNAs by binding to its 3'-UTR and facilitating miRNA regulation. Plays a role in cytoplasmic sensing of viral infection. Represses a program of genes necessary to maintain genomic stability such as key mitotic, DNA repair and DNA replication factors. Its ability to repress those target mRNAs is regulated by the lncRNA NORAD (non-coding RNA activated by DNA damage) which, due to its high abundance and multitude of PUMILIO binding sites, is able to sequester a significant fraction of PUM1 and PUM2 in the cytoplasm. May regulate DCUN1D3 mRNA levels. May support proliferation and self-renewal of stem cells. Binds specifically to miRNA MIR199A precursor, with PUM1, regulates miRNA MIR199A expression at a postranscriptional level. This Homo sapiens (Human) protein is Pumilio homolog 2 (PUM2).